Reading from the N-terminus, the 230-residue chain is ATP synthase subunit a (230 aa).

5 consecutive transmembrane segments (helical) span residues 17 to 37 (LPIT…FIMA), 78 to 98 (IFPF…IGVI), 107 to 127 (DLSV…WFGI), 165 to 187 (LFGN…GFLV), and 198 to 218 (EAII…AGGI).

Belongs to the ATPase A chain family. As to quaternary structure, F-type ATPases have 2 components, CF(1) - the catalytic core - and CF(0) - the membrane proton channel. CF(1) has five subunits: alpha(3), beta(3), gamma(1), delta(1), epsilon(1). CF(0) has three main subunits: a(1), b(2) and c(9-12). The alpha and beta chains form an alternating ring which encloses part of the gamma chain. CF(1) is attached to CF(0) by a central stalk formed by the gamma and epsilon chains, while a peripheral stalk is formed by the delta and b chains.

The protein localises to the cell inner membrane. Key component of the proton channel; it plays a direct role in the translocation of protons across the membrane. This Legionella pneumophila subsp. pneumophila (strain Philadelphia 1 / ATCC 33152 / DSM 7513) protein is ATP synthase subunit a.